A 111-amino-acid chain; its full sequence is Universal stress protein B (111 aa).

Residues 1 to 21 (MISTVSLFWALCVVCIVNMAR) form a helical membrane-spanning segment. Topologically, residues 22–89 (YFSSLRALLV…IRRCERVRRQ (68 aa)) are cytoplasmic. Residues 90–110 (FLLTSALCGLVVVSLIALMIW) form a helical membrane-spanning segment. His-111 is a topological domain (periplasmic).

The protein belongs to the universal stress protein B family.

Its subcellular location is the cell inner membrane. In Salmonella choleraesuis (strain SC-B67), this protein is Universal stress protein B (uspB).